Here is a 346-residue protein sequence, read N- to C-terminus: O-methyltransferase atr3 (346 aa).

Disordered stretches follow at residues 1-22 (MTSVDTMPPPMVRLESQPDDLM) and 52-88 (GLKSHPVVTTGTEKTGVMPPLQPESKKNNKGVPWYHA). S-adenosyl-L-methionine is bound by residues 190–191 (DL) and 217–218 (DI).

This sequence belongs to the class I-like SAM-binding methyltransferase superfamily. As to quaternary structure, homodimer.

It catalyses the reaction 4-O-demethylbarbatate + S-adenosyl-L-methionine = proatranorin I + S-adenosyl-L-homocysteine. It functions in the pathway secondary metabolite biosynthesis; terpenoid biosynthesis. In terms of biological role, O-methyltransferase; part of the gene cluster that mediates the biosynthesis of atranorin, a depside of polyketide origin that accumulates in the cortical or medullary layers of lichen thalli. Atr3 methylates the carboxyl group of 4-O-demethylbarbatic acid to yield proatranorin I. Atr3 is also able to methylate the atr2 product proatranorin III to produce the final compound atranorin. The first step in the pathway is performed by the non-reducing polyketide synthase atr1 that produces 4-O-demethylbarbatic acid composed of two 3-methylorsellinic acid (3MOA) moieties. The pathway continues with the actions of the cytochrome P450 monooygenase atr2 that catalizes the oxidation of c-9 and the O-methyltransferase atr3 that performs the methylation of the carboxyl group to yield atranorin, via the proatranorin II and III intermediates if atr2 acts first, or the proatranorin I intermediate if atr3 acts first. This chain is O-methyltransferase atr3, found in Stereocaulon alpinum (Alpine snow lichen).